A 400-amino-acid polypeptide reads, in one-letter code: Multiphosphoryl transfer protein (400 aa).

The PTS EIIA type-2 domain occupies 2-142; sequence LELTTQDIQL…QQIIAIIKGE (141 aa). The Tele-phosphohistidine intermediate; for EIIA activity role is filled by His62. Phosphohistidine; by HPr is present on His62. An HPr domain is found at 310-400; the sequence is AHTATFRIKN…VAINAGLGEG (91 aa). His324 functions as the Pros-phosphohistidine intermediate; for HPr activity in the catalytic mechanism. His324 bears the Phosphohistidine; by EI mark.

The protein resides in the cytoplasm. Functionally, the phosphoenolpyruvate-dependent sugar phosphotransferase system (sugar PTS), a major carbohydrate active transport system, catalyzes the phosphorylation of incoming sugar substrates concomitantly with their translocation across the cell membrane. The enzyme II FruAB PTS system is involved in fructose transport. This chain is Multiphosphoryl transfer protein, found in Vibrio cholerae serotype O1 (strain ATCC 39315 / El Tor Inaba N16961).